The primary structure comprises 151 residues: Methylated-DNA--protein-cysteine methyltransferase (151 aa).

Cysteine 119 (nucleophile; methyl group acceptor) is an active-site residue.

It belongs to the MGMT family.

The protein localises to the cytoplasm. The catalysed reaction is a 6-O-methyl-2'-deoxyguanosine in DNA + L-cysteinyl-[protein] = S-methyl-L-cysteinyl-[protein] + a 2'-deoxyguanosine in DNA. It catalyses the reaction a 4-O-methyl-thymidine in DNA + L-cysteinyl-[protein] = a thymidine in DNA + S-methyl-L-cysteinyl-[protein]. Its function is as follows. Involved in the cellular defense against the biological effects of O6-methylguanine (O6-MeG) and O4-methylthymine (O4-MeT) in DNA. Repairs the methylated nucleobase in DNA by stoichiometrically transferring the methyl group to a cysteine residue in the enzyme. This is a suicide reaction: the enzyme is irreversibly inactivated. This chain is Methylated-DNA--protein-cysteine methyltransferase, found in Saccharolobus islandicus (strain Y.N.15.51 / Yellowstone #2) (Sulfolobus islandicus).